A 562-amino-acid polypeptide reads, in one-letter code: Probable malate:quinone oxidoreductase (562 aa).

Residues 535–562 (SATPADPTIAPKNQHSTTYNANSEMQAL) form a disordered region. Polar residues predominate over residues 545-562 (PKNQHSTTYNANSEMQAL).

The protein belongs to the MQO family. The cofactor is FAD.

The enzyme catalyses (S)-malate + a quinone = a quinol + oxaloacetate. It functions in the pathway carbohydrate metabolism; tricarboxylic acid cycle; oxaloacetate from (S)-malate (quinone route): step 1/1. This is Probable malate:quinone oxidoreductase from Xylella fastidiosa (strain M23).